A 206-amino-acid chain; its full sequence is MSQGLFITLEGPEGAGKTTQLARLEARLRAAGHAVTVTREPGGTPLGTRVREVVLDPAVEIEPLGEFLLYSASRAQLVREVLRPALERGETVLCDRYADSSLAYQGAGRGLSLPLLRQITAEVTGGLTPGLTVLLDLDPALGLQRAARRGQPDRLEQADLTFHRRVRQGFLDLAHAEPQRFLVLDATRPEDELEAEIWAAVSERGH.

Residue 11–18 participates in ATP binding; it reads GPEGAGKT.

It belongs to the thymidylate kinase family.

The enzyme catalyses dTMP + ATP = dTDP + ADP. Phosphorylation of dTMP to form dTDP in both de novo and salvage pathways of dTTP synthesis. The chain is Thymidylate kinase (tmk) from Deinococcus radiodurans (strain ATCC 13939 / DSM 20539 / JCM 16871 / CCUG 27074 / LMG 4051 / NBRC 15346 / NCIMB 9279 / VKM B-1422 / R1).